The primary structure comprises 148 residues: Ribonuclease H (148 aa).

Residues 2–143 (TADIIYIYSD…ADVLANQGVL (142 aa)) enclose the RNase H type-1 domain. Mg(2+)-binding residues include Asp11, Glu49, Asp71, and Asp135.

This sequence belongs to the RNase H family. In terms of assembly, monomer. Mg(2+) serves as cofactor.

Its subcellular location is the cytoplasm. The enzyme catalyses Endonucleolytic cleavage to 5'-phosphomonoester.. Endonuclease that specifically degrades the RNA of RNA-DNA hybrids. The protein is Ribonuclease H of Thiobacillus denitrificans (strain ATCC 25259 / T1).